The following is a 397-amino-acid chain: Acetate kinase (397 aa).

Residue Asn8 coordinates Mg(2+). Lys15 lines the ATP pocket. Residue Arg89 coordinates substrate. Asp146 serves as the catalytic Proton donor/acceptor. Residues 206 to 210, 281 to 283, and 329 to 333 contribute to the ATP site; these read HLGNG, DLR, and GIGEN. Glu382 contributes to the Mg(2+) binding site.

Belongs to the acetokinase family. In terms of assembly, homodimer. It depends on Mg(2+) as a cofactor. The cofactor is Mn(2+).

It localises to the cytoplasm. The catalysed reaction is acetate + ATP = acetyl phosphate + ADP. It participates in metabolic intermediate biosynthesis; acetyl-CoA biosynthesis; acetyl-CoA from acetate: step 1/2. Catalyzes the formation of acetyl phosphate from acetate and ATP. Can also catalyze the reverse reaction. This chain is Acetate kinase, found in Geobacillus sp. (strain WCH70).